A 493-amino-acid chain; its full sequence is Cyclin-dependent kinase-like 2 (493 aa).

A Protein kinase domain is found at 4 to 287 (YENLGLVGEG…CAELLHHDFF (284 aa)). ATP is bound by residues 10–18 (VGEGSYGMV) and lysine 33. The [NKR]KIAxRE signature appears at 45–51 (KKIAMRE). The active-site Proton acceptor is the aspartate 126. 2 disordered regions span residues 311–338 (VSLS…KTLV) and 363–384 (GEKA…SRTS). A compositionally biased stretch (basic and acidic residues) spans 320 to 336 (RKKEKEKDDSLGEERKT).

Belongs to the protein kinase superfamily. CMGC Ser/Thr protein kinase family. CDC2/CDKX subfamily.

It localises to the cytoplasm. The protein localises to the nucleus. It carries out the reaction L-seryl-[protein] + ATP = O-phospho-L-seryl-[protein] + ADP + H(+). The catalysed reaction is L-threonyl-[protein] + ATP = O-phospho-L-threonyl-[protein] + ADP + H(+). The protein is Cyclin-dependent kinase-like 2 of Pongo abelii (Sumatran orangutan).